The sequence spans 197 residues: dITP/XTP pyrophosphatase (197 aa).

8–13 (TGNPGK) serves as a coordination point for substrate. Positions 40 and 69 each coordinate Mg(2+). The active-site Proton acceptor is aspartate 69. Substrate-binding positions include serine 70, 154-157 (FGYD), lysine 177, and 182-183 (HR).

The protein belongs to the HAM1 NTPase family. Homodimer. Requires Mg(2+) as cofactor.

The enzyme catalyses XTP + H2O = XMP + diphosphate + H(+). The catalysed reaction is dITP + H2O = dIMP + diphosphate + H(+). It carries out the reaction ITP + H2O = IMP + diphosphate + H(+). Functionally, pyrophosphatase that catalyzes the hydrolysis of nucleoside triphosphates to their monophosphate derivatives, with a high preference for the non-canonical purine nucleotides XTP (xanthosine triphosphate), dITP (deoxyinosine triphosphate) and ITP. Seems to function as a house-cleaning enzyme that removes non-canonical purine nucleotides from the nucleotide pool, thus preventing their incorporation into DNA/RNA and avoiding chromosomal lesions. This Photorhabdus laumondii subsp. laumondii (strain DSM 15139 / CIP 105565 / TT01) (Photorhabdus luminescens subsp. laumondii) protein is dITP/XTP pyrophosphatase.